The chain runs to 271 residues: ATP synthase subunit a (271 aa).

5 consecutive transmembrane segments (helical) span residues 40 to 60 (TINI…LVLF), 100 to 120 (LIAP…LMDL), 146 to 166 (DVNV…FYNI), 220 to 240 (LIFI…LNVP), and 242 to 262 (AIFH…LTIV).

This sequence belongs to the ATPase A chain family. F-type ATPases have 2 components, CF(1) - the catalytic core - and CF(0) - the membrane proton channel. CF(1) has five subunits: alpha(3), beta(3), gamma(1), delta(1), epsilon(1). CF(0) has three main subunits: a(1), b(2) and c(9-12). The alpha and beta chains form an alternating ring which encloses part of the gamma chain. CF(1) is attached to CF(0) by a central stalk formed by the gamma and epsilon chains, while a peripheral stalk is formed by the delta and b chains.

It is found in the cell inner membrane. Key component of the proton channel; it plays a direct role in the translocation of protons across the membrane. The sequence is that of ATP synthase subunit a from Shigella flexneri.